We begin with the raw amino-acid sequence, 2181 residues long: Genome polyprotein (2181 aa).

Glycine 80 carries N-myristoyl glycine; by host lipidation. 2 interaction with host receptor ANTXR1 regions span residues 316 to 337 and 761 to 772; these read DYRT…PPNW and RFGLYANPSGSG. One can recognise an SF3 helicase domain in the interval 1165 to 1333; the sequence is LGKTNLAQSL…YKKHTRLNFD (169 aa). 1197-1204 contacts ATP; that stretch reads GKPGCGKS. The segment at 1472-1500 is disordered; sequence EETESEGSVKAPRSENAYDGPKKNSKPPG. Residue tyrosine 1489 is modified to O-(5'-phospho-RNA)-tyrosine. Residues 1511–1704 form the Peptidase C3 domain; that stretch reads NVDMGFEAAV…AGTYISKLGL (194 aa). Histidine 1556 functions as the For protease 3C activity and deubiquitinase activity in the catalytic mechanism. The active-site For protease 3C activity is the aspartate 1592. Residue cysteine 1668 is the For protease 3C activity and deubiquitinase activity of the active site. The RdRp catalytic domain maps to 1950 to 2068; the sequence is KNTYDVDYSA…GTDYDLDFNE (119 aa). Active-site for RdRp activity residues include aspartate 1956 and aspartate 2054.

In terms of assembly, interacts with host entry receptor ANTRX1. As to quaternary structure, interacts with host IRF3; this interaction is involved in the suppression of IRF3 and IRF7 expression and phosphorylation by the virus. Interacts with host IRF7; this interaction is involved in the suppression of IRF3 and IRF7 expression and phosphorylation by the virus. Interacts with host MAVS; this interaction allows the cleavage of MAVS and subsequent suppression of host immunity. Interacts with host TRIF; this interaction allows the cleavage of TRIF and subsequent suppression of host immunity. Interacts with host TANK; this interaction allows the cleavage of TANK and subsequent suppression of host immunity. Interacts with host RIGI. Interacts with host TBK1. Interacts with host TRAF3. Post-translationally, specific enzymatic cleavages by the viral protease in vivo yield a variety of precursors and mature proteins. The polyprotein seems to be cotranslationally cleaved at the 2A/2B junction by a ribosomal skip from one codon to the next without formation of a peptide bond. This process would release the P1-2A peptide from the translational complex. During virion maturation, immature virions are rendered infectious following cleavage of VP0 into VP4 and VP2. This maturation seems to be an autocatalytic event triggered by the presence of RNA in the capsid and is followed by a conformational change of the particle. In terms of processing, myristoylation is required during RNA encapsidation and formation of the mature virus particle. Post-translationally, uridylylated by the polymerase and is covalently linked to the 5'-end of genomic RNA. This uridylylated form acts as a nucleotide-peptide primer for the polymerase.

Its subcellular location is the virion. The protein localises to the host cytoplasm. It localises to the host nucleus. It is found in the host nucleolus. The protein resides in the host cytoplasmic vesicle membrane. The catalysed reaction is RNA(n) + a ribonucleoside 5'-triphosphate = RNA(n+1) + diphosphate. It catalyses the reaction Selective cleavage of Gln-|-Gly bond in the poliovirus polyprotein. In other picornavirus reactions Glu may be substituted for Gln, and Ser or Thr for Gly.. It carries out the reaction Thiol-dependent hydrolysis of ester, thioester, amide, peptide and isopeptide bonds formed by the C-terminal Gly of ubiquitin (a 76-residue protein attached to proteins as an intracellular targeting signal).. The enzyme catalyses ATP + H2O = ADP + phosphate + H(+). Its function is as follows. Forms an icosahedral capsid of pseudo T=3 symmetry with capsid proteins VP2 and VP3. Together they form an icosahedral capsid composed of 60 copies of each VP1, VP2, and VP3, with a diameter of approximately 325 Angstroms. VP4 lies on the inner surface of the protein shell formed by VP1, VP2 and VP3. All the three latter proteins contain a beta-sheet structure called beta-barrel jelly roll. VP1 is situated at the 12 fivefold axes, whereas VP2 and VP3 are located at the quasi-sixfold axes. Binds the host receptor ANTXR1 for attachment and uncoating (entry). In terms of biological role, forms an icosahedral capsid of pseudo T=3 symmetry with capsid proteins VP2 and VP3. Together they form an icosahedral capsid composed of 60 copies of each VP1, VP2, and VP3, with a diameter of approximately 270 Angstroms. VP4 lies on the inner surface of the protein shell formed by VP1, VP2 and VP3. All the three latter proteins contain a beta-sheet structure called beta-barrel jelly roll. VP1 is situated at the 12 fivefold axes, whereas VP2 and VP3 are located at the quasi-sixfold axes. Binds the host receptor ANTXR1 for attachment and uncoating (entry). Forms an icosahedral capsid of pseudo T=3 symmetry with capsid proteins VP2 and VP3. Together they form an icosahedral capsid composed of 60 copies of each VP1, VP2, and VP3, with a diameter of approximately 270 Angstroms. VP4 lies on the inner surface of the protein shell formed by VP1, VP2 and VP3. All the three latter proteins contain a beta-sheet structure called beta-barrel jelly roll. VP1 is situated at the 12 fivefold axes, whereas VP2 and VP3 are located at the quasi-sixfold axes. Vp3 also seems to be involved in the binding to host receptor ANTXR1 for attachment and uncoating (entry). Functionally, lies on the inner surface of the capsid shell. After binding to the host receptor, the capsid undergoes conformational changes. Capsid protein VP4 is released, capsid protein VP1 N-terminus is externalized, and together, they shape a pore in the host membrane through which the viral genome is translocated into the host cell cytoplasm. After genome has been released, the channel shrinks. Its function is as follows. VP0 precursor is a component of immature procapsids. In terms of biological role, mediates self-processing of the polyprotein by a translational effect termed 'ribosome skipping'. Mechanistically, 2A-mediated cleavage occurs between the C-terminal glycine and the proline of the downstream protein 2B. Plays an essential role in the virus replication cycle by acting as a viroporin. Creates a pore in the host endoplasmic reticulum and as a consequence releases Ca2+ in the cytoplasm of infected cell. In turn, high levels of cytoplasmic calcium may trigger membrane trafficking and transport of viral ER-associated proteins to viroplasms, sites of viral genome replication. Functionally, associates with and induces structural rearrangements of intracellular membranes. Its function is as follows. Covalently linked to the 5'-end of both the positive-strand and negative-strand genomic RNAs. Acts as a genome-linked replication primer. In terms of biological role, cysteine protease that generates mature viral proteins from the precursor polyprotein. Inactivates crucial host adapter molecules in order to suppress antiviral type-I interferon (type-I IFN) and NF-kappaB production to escape host antiviral innate immune responses. Deubiquitinase that acts on both lysine-48- and lysine-63-linked polyubiquitin chains and inhibits the ubiquitination of the ATP-dependent RNA helicase RIGI, TANK-binding kinase 1 (TBK1), and TNF receptor-associated factor 3 (TRAF3), thereby blocking the expression of IFN-beta and IFN stimulated gene 54 (ISG54). Induces host IRF3 and IRF7 degradation thereby suppressing IRF3- and IRF7-induced type-I IFN production. Also decreases host IRF3 phosphorylation leading to negligible IRF3 activation. Cleaves host MAVS, TRIF and TANK, which are then unable to regulate pattern recognition receptor (PRR)-mediated type-I IFN production. Inhibits the integrated stress response (ISR) in the infected cell by disrupting eIF4GI-G3BP1 interaction. Stress granule formation is thus inhibited. Replicates the genomic and antigenomic RNAs by recognizing replications specific signals. Performs VPg uridylylation. The polypeptide is Genome polyprotein (Sus scrofa (Pig)).